The primary structure comprises 239 residues: Large ribosomal subunit protein mL67 (239 aa).

It belongs to the mitochondrion-specific ribosomal protein mL67 family. As to quaternary structure, component of the mitochondrial large ribosomal subunit (mt-LSU).

It is found in the nucleus. Its subcellular location is the mitochondrion. Component of the mitochondrial ribosome (mitoribosome), a dedicated translation machinery responsible for the synthesis of mitochondrial genome-encoded proteins, including at least some of the essential transmembrane subunits of the mitochondrial respiratory chain. The mitoribosomes are attached to the mitochondrial inner membrane and translation products are cotranslationally integrated into the membrane. mL67/MHR1 also has extraribosomal functions, being involved in regulation of mitochondrial DNA recombination, maintenance and repair, and generation of homoplasmic cells. mL67/MHR1 also acts as transcription factor involved in regulation of RNA polymerase II-dependent transcription. In Candida albicans (strain SC5314 / ATCC MYA-2876) (Yeast), this protein is Large ribosomal subunit protein mL67 (MHR1).